The sequence spans 153 residues: Aspartate carbamoyltransferase regulatory chain (153 aa).

Zn(2+)-binding residues include cysteine 109, cysteine 114, cysteine 138, and cysteine 141.

It belongs to the PyrI family. Contains catalytic and regulatory chains. Zn(2+) serves as cofactor.

Functionally, involved in allosteric regulation of aspartate carbamoyltransferase. This chain is Aspartate carbamoyltransferase regulatory chain, found in Shigella dysenteriae serotype 1 (strain Sd197).